The following is a 73-amino-acid chain: Large ribosomal subunit protein bL31 (73 aa).

The protein belongs to the bacterial ribosomal protein bL31 family. Type A subfamily. In terms of assembly, part of the 50S ribosomal subunit.

Functionally, binds the 23S rRNA. In Rhizobium rhizogenes (strain K84 / ATCC BAA-868) (Agrobacterium radiobacter), this protein is Large ribosomal subunit protein bL31.